Here is a 610-residue protein sequence, read N- to C-terminus: Sodium-coupled monocarboxylate transporter 1 (610 aa).

Over 1–9 (MDTPRGIGT) the chain is Extracellular. The helical transmembrane segment at 10–30 (FVVWDYVVFAGMLVISAAIGI) threads the bilayer. The Cytoplasmic segment spans residues 31–51 (YYAFAGGGQQTSKDFLMGGRR). A helical transmembrane segment spans residues 52-72 (MTAVPVALSLTASFMSAVTVL). Topologically, residues 73-83 (GTPSEVYRFGA) are extracellular. The helical transmembrane segment at 84-104 (IFSIFAFTYFFVVVISAEVFL) threads the bilayer. Residues 105 to 132 (PVFYKLGITSTYEYLELRFNKCVRLCGT) are Cytoplasmic-facing. The chain crosses the membrane as a helical span at residues 133-153 (VLFIVQTILYTGIVIYAPALA). Residues 154–161 (LNQVTGFD) lie on the Extracellular side of the membrane. A helical membrane pass occupies residues 162–182 (LWGAVVATGVVCTFYCTLGGL). Residues 183-189 (KAVIWTD) are Cytoplasmic-facing. Residues 190-210 (VFQVGIMVAGFASVIIQAVVM) form a helical membrane-spanning segment. Residues 211–239 (QGGISTILNDAYDGGRLNFWNFNPNPLQR) are Extracellular-facing. Residues 240-260 (HTFWTIIIGGTFTWTSIYGVN) traverse the membrane as a helical segment. At 261–279 (QSQVQRYISCKSRFQAKLS) the chain is on the cytoplasmic side. Residues 280 to 300 (LYINLVGLWAILTCSVFCGLA) traverse the membrane as a helical segment. Over 301 to 336 (LYSRYHDCDPWTAKKVSAPDQLMPYLVLDILQDYPG) the chain is Extracellular. The chain crosses the membrane as a helical span at residues 337 to 359 (LPGLFVACAYSGTLSTVSSSINA). Over 360–389 (LAAVTVEDLIKPYFRSLSERSLSWISQGMS) the chain is Cytoplasmic. A helical transmembrane segment spans residues 390–410 (VVYGALCIGMAALASLMGALL). Residues 411 to 415 (QAALS) are Extracellular-facing. The chain crosses the membrane as a helical span at residues 416-436 (VFGMVGGPLMGLFALGILVPF). The Cytoplasmic portion of the chain corresponds to 437 to 439 (ANS). A helical transmembrane segment spans residues 440–460 (IGALVGLMAGFAISLWVGIGA). The Extracellular portion of the chain corresponds to 461-518 (QIYPPLPERTLPLHLDIQGCNSTYNETNLMTTTEMPFTTSVFQIYNVQRTPLMDNWYS). N-linked (GlcNAc...) asparagine glycosylation occurs at Asn485. Residues 519–539 (LSYLYFSTVGTLVTLLVGILV) form a helical membrane-spanning segment. At 540–610 (SLSTGGRKQN…QSGKSNGTRL (71 aa)) the chain is on the cytoplasmic side. The interval 585–610 (GGTDNPAFNHIELNSDQSGKSNGTRL) is disordered. Positions 596–610 (ELNSDQSGKSNGTRL) are enriched in polar residues. The PDZ-binding motif lies at 608-610 (TRL).

This sequence belongs to the sodium:solute symporter (SSF) (TC 2.A.21) family. In terms of assembly, interacts (via PDZ-binding motif) with PDZK1 (via PDZ domains 1 and 3); interaction increases nicotinate transport activity of SLC5A8. As to expression, expressed in normal thyroid, localized at the apical pole of thyroid cells facing the colloid lumen, but expression profoundly decreased in thyroid carcinomas. Expressed in normal colon but absent in colon aberrant crypt foci and colon cancers. Present in normal kidney cortex, brain, prostate, gastric mucosa and breast tissue but was significantly down-regulated in primary gliomas, gastric cancer, prostate tumors and breast tumors.

Its subcellular location is the apical cell membrane. The catalysed reaction is (S)-lactate(out) + 2 Na(+)(out) = (S)-lactate(in) + 2 Na(+)(in). It catalyses the reaction propanoate(out) + 2 Na(+)(out) = propanoate(in) + 2 Na(+)(in). It carries out the reaction pyruvate(out) + 2 Na(+)(out) = pyruvate(in) + 2 Na(+)(in). The enzyme catalyses acetate(out) + 2 Na(+)(out) = acetate(in) + 2 Na(+)(in). The catalysed reaction is butanoate(out) + 2 Na(+)(out) = butanoate(in) + 2 Na(+)(in). It catalyses the reaction nicotinate(out) + 2 Na(+)(out) = nicotinate(in) + 2 Na(+)(in). It carries out the reaction (R)-3-hydroxybutanoate(out) + 2 Na(+)(out) = (R)-3-hydroxybutanoate(in) + 2 Na(+)(in). The enzyme catalyses acetoacetate(out) + 2 Na(+)(out) = acetoacetate(in) + 2 Na(+)(in). The catalysed reaction is 4-methyl-2-oxopentanoate(out) + 2 Na(+)(out) = 4-methyl-2-oxopentanoate(in) + 2 Na(+)(in). It catalyses the reaction 5-oxo-L-proline(out) + 2 Na(+)(out) = 5-oxo-L-proline(in) + 2 Na(+)(in). It carries out the reaction iodide(out) = iodide(in). The enzyme catalyses chloride(in) = chloride(out). The catalysed reaction is nitrate(in) = nitrate(out). It catalyses the reaction bromide(in) = bromide(out). With respect to regulation, increase of iodide influx inhibited by addition of perchlorate (NaClO(4)), a competitive inhibitor of iodide uptake catalyzed by sodium iodide symporter (NIS). Cotransport of monocarboxylates and nicotinate strongly inhibited by probenecid, nonsteroid anti-inflammatory drugs (ibuprofen, fenoprofen, ketprofen, naproxen) in a Na(+)-dependent manner or by prolonged exposure to external concentrations of monocarboxylates. In terms of biological role, acts as an electrogenic sodium (Na(+)) and chloride (Cl-)-dependent sodium-coupled solute transporter, including transport of monocarboxylates (short-chain fatty acids including L-lactate, D-lactate, pyruvate, acetate, propionate, valerate and butyrate), mocarboxylate drugs (nicotinate, benzoate, salicylate and 5-aminosalicylate) and ketone bodies (beta-D-hydroxybutyrate, acetoacetate and alpha-ketoisocaproate), with a Na(+):substrate stoichiometry of between 4:1 and 2:1. Catalyzes passive carrier mediated diffusion of iodide. Mediates iodide transport from the thyrocyte into the colloid lumen through the apical membrane. May be responsible for the absorption of D-lactate and monocarboxylate drugs from the intestinal tract. Acts as a tumor suppressor, suppressing colony formation in colon cancer, prostate cancer and glioma cell lines. May play a critical role in the entry of L-lactate and ketone bodies into neurons by a process driven by an electrochemical Na(+) gradient and hence contribute to the maintenance of the energy status and function of neurons. Mediates sodium-coupled electrogenic transport of pyroglutamate (5-oxo-L-proline). Can mediate the transport of chloride, bromide, iodide and nitrate ions when the external concentration of sodium ions is reduced. This Homo sapiens (Human) protein is Sodium-coupled monocarboxylate transporter 1.